Reading from the N-terminus, the 2648-residue chain is E3 ubiquitin-protein ligase hecd-1 (2648 aa).

2 ANK repeats span residues Val-374–Lys-403 and His-405–Leu-434. A compositionally biased stretch (basic and acidic residues) spans Asp-433 to Asn-455. 3 disordered regions span residues Asp-433–Asn-494, Pro-645–Ala-714, and Asp-1376–Pro-1400. Composition is skewed to polar residues over residues Ala-478–Lys-489, Asn-652–Pro-661, and Thr-670–Thr-688. Low complexity-rich tracts occupy residues Ser-696–Ala-714 and Pro-1383–Pro-1400. The 73-residue stretch at Arg-1438–Thr-1510 folds into the MIB/HERC2 domain. Disordered regions lie at residues Tyr-1538–Arg-1562, Lys-1575–His-1629, Asn-1652–Gly-1796, and Glu-1811–Pro-1836. 2 stretches are compositionally biased toward low complexity: residues Thr-1543–Arg-1562 and Lys-1575–Gly-1586. A compositionally biased stretch (polar residues) spans Thr-1610–His-1629. Over residues Gln-1653 to Asp-1666 the composition is skewed to acidic residues. Over residues Ser-1667–Asp-1696 the composition is skewed to low complexity. Acidic residues-rich tracts occupy residues Thr-1736 to Asn-1746 and Asp-1756 to Ser-1783. Low complexity predominate over residues Ser-1812–Ala-1823. In terms of domain architecture, HECT spans Phe-2240–Asn-2648. Cys-2617 (glycyl thioester intermediate) is an active-site residue.

Belongs to the UPL family. K-HECT subfamily. As to expression, expressed in most tissues, including hypodermis, muscle, intestine, vulva, and neurons.

It catalyses the reaction S-ubiquitinyl-[E2 ubiquitin-conjugating enzyme]-L-cysteine + [acceptor protein]-L-lysine = [E2 ubiquitin-conjugating enzyme]-L-cysteine + N(6)-ubiquitinyl-[acceptor protein]-L-lysine.. It functions in the pathway protein modification; protein ubiquitination. In terms of biological role, E3 ubiquitin-protein ligase which accepts ubiquitin from an E2 ubiquitin-conjugating enzyme in the form of a thioester and then directly transfers the ubiquitin to targeted substrates. Involved in the ubiquitination and proteasomal-mediated degradation of cytoplasmic and mitochondrial proteins. Positively regulates lin-12 activity in the anchor cell (AC)/vulval precursor (VU) cell fate decision. Negatively regulates glp-1 activity in germline proliferation. May play a role in the formation of fibrous organelles, a hemidesmosome-like structure attaching muscles to the epidermis. Regulates germline DNA double-strand-break repair and apoptosis in response to DNA damage by recruiting E4 ubiquitin-protein ligase ufd-2 to DNA repair foci. The polypeptide is E3 ubiquitin-protein ligase hecd-1 (Caenorhabditis elegans).